The chain runs to 162 residues: 6,7-dimethyl-8-ribityllumazine synthase (162 aa).

5-amino-6-(D-ribitylamino)uracil is bound by residues Phe-22, 56 to 58 (TFE), and 80 to 82 (AVI). Residue 85–86 (GT) participates in (2S)-2-hydroxy-3-oxobutyl phosphate binding. His-88 (proton donor) is an active-site residue. Met-113 contacts 5-amino-6-(D-ribitylamino)uracil. Arg-127 lines the (2S)-2-hydroxy-3-oxobutyl phosphate pocket.

This sequence belongs to the DMRL synthase family.

It catalyses the reaction (2S)-2-hydroxy-3-oxobutyl phosphate + 5-amino-6-(D-ribitylamino)uracil = 6,7-dimethyl-8-(1-D-ribityl)lumazine + phosphate + 2 H2O + H(+). The protein operates within cofactor biosynthesis; riboflavin biosynthesis; riboflavin from 2-hydroxy-3-oxobutyl phosphate and 5-amino-6-(D-ribitylamino)uracil: step 1/2. In terms of biological role, catalyzes the formation of 6,7-dimethyl-8-ribityllumazine by condensation of 5-amino-6-(D-ribitylamino)uracil with 3,4-dihydroxy-2-butanone 4-phosphate. This is the penultimate step in the biosynthesis of riboflavin. This is 6,7-dimethyl-8-ribityllumazine synthase from Anaeromyxobacter dehalogenans (strain 2CP-1 / ATCC BAA-258).